The following is a 283-amino-acid chain: ATP phosphoribosyltransferase (283 aa).

It belongs to the ATP phosphoribosyltransferase family. Long subfamily. It depends on Mg(2+) as a cofactor.

It is found in the cytoplasm. It catalyses the reaction 1-(5-phospho-beta-D-ribosyl)-ATP + diphosphate = 5-phospho-alpha-D-ribose 1-diphosphate + ATP. The protein operates within amino-acid biosynthesis; L-histidine biosynthesis; L-histidine from 5-phospho-alpha-D-ribose 1-diphosphate: step 1/9. With respect to regulation, feedback inhibited by histidine. Catalyzes the condensation of ATP and 5-phosphoribose 1-diphosphate to form N'-(5'-phosphoribosyl)-ATP (PR-ATP). Has a crucial role in the pathway because the rate of histidine biosynthesis seems to be controlled primarily by regulation of HisG enzymatic activity. This is ATP phosphoribosyltransferase from Bifidobacterium longum subsp. infantis (strain ATCC 15697 / DSM 20088 / JCM 1222 / NCTC 11817 / S12).